The sequence spans 289 residues: 33 kDa chaperonin (289 aa).

2 cysteine pairs are disulfide-bonded: C229–C231 and C262–C265.

Belongs to the HSP33 family. In terms of processing, under oxidizing conditions two disulfide bonds are formed involving the reactive cysteines. Under reducing conditions zinc is bound to the reactive cysteines and the protein is inactive.

It is found in the cytoplasm. In terms of biological role, redox regulated molecular chaperone. Protects both thermally unfolding and oxidatively damaged proteins from irreversible aggregation. Plays an important role in the bacterial defense system toward oxidative stress. This chain is 33 kDa chaperonin, found in Pectobacterium carotovorum subsp. carotovorum (strain PC1).